We begin with the raw amino-acid sequence, 460 residues long: Cysteine--tRNA ligase (460 aa).

Position 28 (C28) interacts with Zn(2+). Positions 30-40 match the 'HIGH' region motif; that stretch reads MTVYDYCHLGH. Residues C209, H234, and E238 each coordinate Zn(2+). The short motif at 266-270 is the 'KMSKS' region element; the sequence is KMSKS. K269 is a binding site for ATP.

Belongs to the class-I aminoacyl-tRNA synthetase family. As to quaternary structure, monomer. Zn(2+) is required as a cofactor.

Its subcellular location is the cytoplasm. The enzyme catalyses tRNA(Cys) + L-cysteine + ATP = L-cysteinyl-tRNA(Cys) + AMP + diphosphate. This is Cysteine--tRNA ligase from Pseudomonas savastanoi pv. phaseolicola (strain 1448A / Race 6) (Pseudomonas syringae pv. phaseolicola (strain 1448A / Race 6)).